Reading from the N-terminus, the 803-residue chain is Translation initiation factor IF-2 (803 aa).

Disordered stretches follow at residues 93–123 (TKPV…LNEK) and 138–206 (EVKE…ASAK). Residues 111–121 (VPPTSDTTNLN) are compositionally biased toward polar residues. The segment covering 138–155 (EVKEEAKKTPSEKKETPK) has biased composition (basic and acidic residues). Residues 156 to 167 (KGPRKETRRSRK) show a composition bias toward basic residues. Over residues 168 to 188 (PDKEDKWEREELHMTKLVEER) the composition is skewed to basic and acidic residues. The tr-type G domain maps to 302 to 471 (PRAPVVTIMG…LLQAEVLELK (170 aa)). A G1 region spans residues 311-318 (GHVDHGKT). GTP is bound at residue 311 to 318 (GHVDHGKT). The G2 stretch occupies residues 336–340 (GITQH). The G3 stretch occupies residues 357 to 360 (DTPG). Residues 357–361 (DTPGH) and 411–414 (NKID) contribute to the GTP site. The segment at 411–414 (NKID) is G4. The G5 stretch occupies residues 447 to 449 (SAK).

Belongs to the TRAFAC class translation factor GTPase superfamily. Classic translation factor GTPase family. IF-2 subfamily.

Its subcellular location is the cytoplasm. One of the essential components for the initiation of protein synthesis. Protects formylmethionyl-tRNA from spontaneous hydrolysis and promotes its binding to the 30S ribosomal subunits. Also involved in the hydrolysis of GTP during the formation of the 70S ribosomal complex. This is Translation initiation factor IF-2 from Coxiella burnetii (strain RSA 493 / Nine Mile phase I).